We begin with the raw amino-acid sequence, 612 residues long: Proton channel OTOP1 (612 aa).

Over residues 1–46 (MLEGLGSPASPRAAASASVAGSSGPAACSPPSSSAPRSPESPAPRR) the composition is skewed to low complexity. Positions 1–50 (MLEGLGSPASPRAAASASVAGSSGPAACSPPSSSAPRSPESPAPRRGGVR) are disordered. Topologically, residues 1–58 (MLEGLGSPASPRAAASASVAGSSGPAACSPPSSSAPRSPESPAPRRGGVRASVPQKLA) are cytoplasmic. The chain crosses the membrane as a helical span at residues 59–80 (EMLSSQYGLIVFVAGLLLLLAW). Residues 81-88 (AVHAAGVS) lie on the Extracellular side of the membrane. Residues 89 to 112 (KSDLLCFLTALMLLQLLWMLWYVG) form a helical membrane-spanning segment. Residues 113 to 130 (RSSAHRRLFRLKDTHAGA) are Cytoplasmic-facing. Residues 131–153 (GWLRGSITLFAVITVILGCLKIG) form a helical membrane-spanning segment. Residues 154-163 (YFIGFSECLS) are Extracellular-facing. Residues 164-188 (ATEGVFPVTHSVHTLLQVYFLWGHA) form a helical membrane-spanning segment. Topologically, residues 189–196 (KDIIQSFK) are cytoplasmic. A helical transmembrane segment spans residues 197–223 (TLERFGVIHSVFTNLLLWANGVLNESK). Residues 224-264 (HQLNEHKERLITLGFGNITTVLDDHTPQCNCTPPTLCTAIS) lie on the Extracellular side of the membrane. The chain crosses the membrane as a helical span at residues 265 to 290 (HGIYYLYPFNIEYQILASTMLYVLWK). Residues 291 to 311 (NIGRKVDSHQHQKMQFKSDGV) lie on the Cytoplasmic side of the membrane. The chain crosses the membrane as a helical span at residues 312 to 334 (MVGAVLGLTVLAATIAVVVVYLI). At 335–344 (HIGRSKTKSE) the chain is on the extracellular side. Residues 345–370 (SALIMFYLYAITLLMLMGAAGLAGIR) form a helical membrane-spanning segment. Over 371–388 (IYRIDEKSLDESKNPARK) the chain is Cytoplasmic. The helical transmembrane segment at 389–413 (LDSDLLVGTASGSWLISWGSILAIL) threads the bilayer. Over 414–423 (CAEGHPRYTW) the chain is Extracellular. A helical transmembrane segment spans residues 424–444 (YNLPYSILAIVEKYIQNLFIF). At 445-544 (ESIHREPEKL…QGNAKRKVLR (100 aa)) the chain is on the cytoplasmic side. A disordered region spans residues 499-525 (ANGNVCMRESHDKEEEKQEESSWGGSP). Over residues 506–518 (RESHDKEEEKQEE) the composition is skewed to basic and acidic residues. The chain crosses the membrane as a helical span at residues 545-563 (NIAAFLFLCNISLWIPPAF). The Extracellular segment spans residues 564–581 (GCRPEYDNGLEEIVFGFE). Residues 582 to 605 (PWIIVVNLAMPFSIFYRMHAAASL) form a helical membrane-spanning segment. At 606 to 612 (FEVYCKI) the chain is on the cytoplasmic side.

The protein belongs to the otopetrin family. Homodimer. Interacts with STAT1, independently of STAT1 phosphorylation status.

It is found in the cell membrane. The protein localises to the cell projection. It localises to the microvillus. The catalysed reaction is H(+)(in) = H(+)(out). Its activity is regulated as follows. Activated by both acid and alkali, with proton influx in response to extracellular acid and proton efflux during alkali stimulation. Inhibited by Zn(2+); this inhibition is thought to be pH-sensitive. Currents evoked in response to mild acid (pH 6.0) stimulus may also be mildly potentiated by exposure to Zn(2+). Activated by NH(4)Cl. Proton-selective ion channel. Biphasically modulated by acid and alkali, mediating proton influx and efflux in response to extracellular acid and base stimulation, respectively. Sour taste receptor, which carries inward currents in response to extracellular acidification. Sensor for ammonium chloride (NH(4)Cl) in taste receptor cells. NH(4)Cl acts by increasing the intracellular pH, thereby generating a driving force for proton entry through OTOP1 channel. Might also participate in alkaline sensation. Plays a role in the regulation of Ca(2+) flux in response to purigenic (ATP, ADP and UDP) stimuli, leading to increase in cytosolic Ca(2+) due to influx of extracellular calcium. May play this role by inhibiting P2Y purinoceptor-mediated Ca(2+) release in a Ca(2+)-dependent manner and promote an influx of Ca(2+) in response to ATP. Through this mechanism and possibly others, plays a role in the formation and function of calcium carbonate-based structures in the vestibular system of the inner ear, called otoconia, that sense gravity and linear acceleration. In obesity, may attenuate adipose tissue inflammation, through the negative regulation of IFNG signaling, hence may play an adaptive role in the maintainance of metabolic homeostasis. Following alkali activation, may also be permeable Na(+), K(+), Cs(+) and Li(+). The polypeptide is Proton channel OTOP1 (Homo sapiens (Human)).